The primary structure comprises 514 residues: Alanine--glyoxylate aminotransferase 2, mitochondrial (514 aa).

The transit peptide at 1–41 (MTLIWRHLLRPLCLVTPAPRILEMRPFLNLGASWTSVTKLS) directs the protein to the mitochondrion. An N6-acetyllysine; alternate modification is found at K71. K71 carries the N6-succinyllysine; alternate modification. An N6-acetyllysine modification is found at K84. Residue K262 is modified to N6-acetyllysine; alternate. The residue at position 262 (K262) is an N6-succinyllysine; alternate. K304 bears the N6-succinyllysine mark. Position 350 is an N6-(pyridoxal phosphate)lysine (K350). N6-acetyllysine; alternate is present on K420. K420 is subject to N6-succinyllysine; alternate.

It belongs to the class-III pyridoxal-phosphate-dependent aminotransferase family. Homotetramer. Requires pyridoxal 5'-phosphate as cofactor.

Its subcellular location is the mitochondrion. It catalyses the reaction glyoxylate + L-alanine = glycine + pyruvate. The enzyme catalyses (R)-3-amino-2-methylpropanoate + pyruvate = 2-methyl-3-oxopropanoate + L-alanine. It carries out the reaction 3-oxopropanoate + L-alanine = beta-alanine + pyruvate. The catalysed reaction is 2-oxobutanoate + L-alanine = (2S)-2-aminobutanoate + pyruvate. It catalyses the reaction N(omega),N(omega)-dimethyl-L-arginine + pyruvate = 5-(3,3-dimethylguanidino)-2-oxopentanoate + L-alanine. The enzyme catalyses N(omega),N('omega)-dimethyl-L-arginine + pyruvate = 5-(3,3'-dimethylguanidino)-2-oxopentanoate + L-alanine. It carries out the reaction N(omega),N(omega)-dimethyl-L-arginine + glyoxylate = 5-(3,3-dimethylguanidino)-2-oxopentanoate + glycine. The catalysed reaction is N(omega),N('omega)-dimethyl-L-arginine + glyoxylate = 5-(3,3'-dimethylguanidino)-2-oxopentanoate + glycine. It catalyses the reaction N(omega)-methyl-L-arginine + pyruvate = 5-(3-methylguanidino)-2-oxopentanoate + L-alanine. The enzyme catalyses N(omega)-methyl-L-arginine + glyoxylate = 5-(3-methylguanidino)-2-oxopentanoate + glycine. It carries out the reaction L-ornithine + pyruvate = 5-amino-2-oxopentanoate + L-alanine. The catalysed reaction is L-ornithine + glyoxylate = 5-amino-2-oxopentanoate + glycine. It catalyses the reaction (2S)-2-aminobutanoate + glyoxylate = 2-oxobutanoate + glycine. The enzyme catalyses N(omega),N(omega)-dimethyl-L-arginine + oxaloacetate = 5-(3,3-dimethylguanidino)-2-oxopentanoate + L-aspartate. It carries out the reaction oxaloacetate + L-alanine = L-aspartate + pyruvate. The catalysed reaction is N(omega),N(omega)-dimethyl-L-arginine + 2-oxobutanoate = 5-(3,3-dimethylguanidino)-2-oxopentanoate + (2S)-2-aminobutanoate. It catalyses the reaction 2-oxopentanoate + N(omega),N(omega)-dimethyl-L-arginine = 5-(3,3-dimethylguanidino)-2-oxopentanoate + L-2-aminopentanoate. The enzyme catalyses 2-oxohexanoate + N(omega),N(omega)-dimethyl-L-arginine = L-2-aminohexanoate + 5-(3,3-dimethylguanidino)-2-oxopentanoate. Its function is as follows. Multifunctional aminotransferase with a broad substrate specificity. Catalyzes the conversion of glyoxylate to glycine using alanine as the amino donor. Catalyzes metabolism of not L- but the D-isomer of D-beta-aminoisobutyric acid to generate 2-methyl-3-oxopropanoate and alanine. Catalyzes the transfer of the amino group from beta-alanine to pyruvate to yield L-alanine and 3-oxopropanoate. Can metabolize NG-monomethyl-L-arginine (NMMA), asymmetric NG,NG-dimethyl-L-arginine (ADMA) and symmetric NG,N'G-dimethyl-L-arginine (SDMA). ADMA is a potent inhibitor of nitric-oxide (NO) synthase, and this activity provides mechanism through which the kidney regulates blood pressure. This chain is Alanine--glyoxylate aminotransferase 2, mitochondrial (AGXT2), found in Pongo abelii (Sumatran orangutan).